Consider the following 147-residue polypeptide: D-aminoacyl-tRNA deacylase (147 aa).

Positions 136–137 (GP) match the Gly-cisPro motif, important for rejection of L-amino acids motif.

This sequence belongs to the DTD family. As to quaternary structure, homodimer.

Its subcellular location is the cytoplasm. It catalyses the reaction glycyl-tRNA(Ala) + H2O = tRNA(Ala) + glycine + H(+). The enzyme catalyses a D-aminoacyl-tRNA + H2O = a tRNA + a D-alpha-amino acid + H(+). Its function is as follows. An aminoacyl-tRNA editing enzyme that deacylates mischarged D-aminoacyl-tRNAs. Also deacylates mischarged glycyl-tRNA(Ala), protecting cells against glycine mischarging by AlaRS. Acts via tRNA-based rather than protein-based catalysis; rejects L-amino acids rather than detecting D-amino acids in the active site. By recycling D-aminoacyl-tRNA to D-amino acids and free tRNA molecules, this enzyme counteracts the toxicity associated with the formation of D-aminoacyl-tRNA entities in vivo and helps enforce protein L-homochirality. The chain is D-aminoacyl-tRNA deacylase from Streptococcus equi subsp. equi (strain 4047).